The sequence spans 709 residues: Fatty acid oxidation complex subunit alpha (709 aa).

The tract at residues 1–188 is enoyl-CoA hydratase; that stretch reads MEKTFNLTRR…KMGLVNDVVP (188 aa). Residues 308 to 709 are 3-hydroxyacyl-CoA dehydrogenase; that stretch reads RKVKKAVILG…EMAAEKTRFF (402 aa).

It in the N-terminal section; belongs to the enoyl-CoA hydratase/isomerase family. In the central section; belongs to the 3-hydroxyacyl-CoA dehydrogenase family. Heterotetramer of two alpha chains (FadJ) and two beta chains (FadI).

The protein localises to the cytoplasm. The enzyme catalyses a (3S)-3-hydroxyacyl-CoA = a (2E)-enoyl-CoA + H2O. The catalysed reaction is a 4-saturated-(3S)-3-hydroxyacyl-CoA = a (3E)-enoyl-CoA + H2O. It carries out the reaction a (3S)-3-hydroxyacyl-CoA + NAD(+) = a 3-oxoacyl-CoA + NADH + H(+). It catalyses the reaction (3S)-3-hydroxybutanoyl-CoA = (3R)-3-hydroxybutanoyl-CoA. Its pathway is lipid metabolism; fatty acid beta-oxidation. Catalyzes the formation of a hydroxyacyl-CoA by addition of water on enoyl-CoA. Also exhibits 3-hydroxyacyl-CoA epimerase and 3-hydroxyacyl-CoA dehydrogenase activities. The sequence is that of Fatty acid oxidation complex subunit alpha from Shewanella sp. (strain MR-7).